The primary structure comprises 345 residues: Methylthioribose-1-phosphate isomerase (345 aa).

Substrate-binding positions include 47–49, arginine 90, and glutamine 197; that span reads RGA. Residue aspartate 238 is the Proton donor of the active site. 248-249 serves as a coordination point for substrate; sequence NK.

The protein belongs to the eIF-2B alpha/beta/delta subunits family. MtnA subfamily.

It carries out the reaction 5-(methylsulfanyl)-alpha-D-ribose 1-phosphate = 5-(methylsulfanyl)-D-ribulose 1-phosphate. It functions in the pathway amino-acid biosynthesis; L-methionine biosynthesis via salvage pathway; L-methionine from S-methyl-5-thio-alpha-D-ribose 1-phosphate: step 1/6. Functionally, catalyzes the interconversion of methylthioribose-1-phosphate (MTR-1-P) into methylthioribulose-1-phosphate (MTRu-1-P). In Thermoanaerobacter pseudethanolicus (strain ATCC 33223 / 39E) (Clostridium thermohydrosulfuricum), this protein is Methylthioribose-1-phosphate isomerase.